A 694-amino-acid chain; its full sequence is Putative L-type lectin-domain containing receptor kinase II.2 (694 aa).

Positions 1–24 (MAGVLRSLRFWMIICVQVLSLVLA) are cleaved as a signal peptide. Residues 25-318 (QDRDEFVYHD…PTSRSKDSKN (294 aa)) are Extracellular-facing. The legume-lectin like stretch occupies residues 27–272 (RDEFVYHDFS…DQYILGWSFK (246 aa)). 10 N-linked (GlcNAc...) asparagine glycosylation sites follow: Asn-57, Asn-58, Asn-73, Asn-131, Asn-172, Asn-183, Asn-201, Asn-208, Asn-240, and Asn-246. The tract at residues 283–314 (SKILDPPNRPPPPSSPPPPPPPPPTPPTSRSK) is disordered. Positions 289–309 (PNRPPPPSSPPPPPPPPPTPP) are enriched in pro residues. A helical membrane pass occupies residues 319-339 (IIIICVTVTSIAFLLMLGGFL). The Cytoplasmic segment spans residues 340–694 (YLYKKKKYAE…EDVTILFGGR (355 aa)). Residues 375–650 (FRENRLLGAG…IQYLEGNATI (276 aa)) enclose the Protein kinase domain. Residues 381-389 (LGAGGFGKV) and Lys-403 each bind ATP. Catalysis depends on Asp-500, which acts as the Proton acceptor.

In the C-terminal section; belongs to the protein kinase superfamily. Ser/Thr protein kinase family. It in the N-terminal section; belongs to the leguminous lectin family.

It localises to the cell membrane. It catalyses the reaction L-seryl-[protein] + ATP = O-phospho-L-seryl-[protein] + ADP + H(+). The enzyme catalyses L-threonyl-[protein] + ATP = O-phospho-L-threonyl-[protein] + ADP + H(+). This is Putative L-type lectin-domain containing receptor kinase II.2 (LECRK22) from Arabidopsis thaliana (Mouse-ear cress).